We begin with the raw amino-acid sequence, 495 residues long: MKLDKNKIQISIGKNPSKTFYKLQLLLKDHFPENLKTKFSFQTASGIFTGENGQIFTDEVEKIIYLGLGETSKIKIRGVAQHFFQFGEKLKKWEGVGLEIHLPKVLTNSLSADLVVYQIVNSLEQGAYAINVLAKEYKENSKKIGNVSFILQDAAKLKEAEKGLKRGKIVSRYINGVRHIAHLPANHFTPEEFVSRSKEIAKDNGLKITVFDEPQLKKEKMGGILSVCEGSDKKAKMILLEYTPVKPITKKKLAIIGKGLTFDSGGISIKPAQDMHEMKYDMCGAATAIHAIGAIAELGLGVPVIAAIGVAENMPDAAAIKPGDVYTAYNGITVEVQNTDAEGRLVLGDVLSYVGKKFKPDYMLDLATLTGAIIISLGHEAAGVMSNSDVLTNLLKEASISSDERIWEMPLWEEYSEDLKSDIADIRNVAGRAGGSLSAAKFLERFVEPGIAWAHIDIAGTAWRKKTSGTQIGNGPTGYGVRLLVDLVEKIGKKK.

Residues Lys258 and Asp263 each contribute to the Mn(2+) site. The active site involves Lys270. Mn(2+)-binding residues include Asp281, Asp340, and Glu342. The active site involves Arg344.

This sequence belongs to the peptidase M17 family. The cofactor is Mn(2+).

The protein localises to the cytoplasm. It carries out the reaction Release of an N-terminal amino acid, Xaa-|-Yaa-, in which Xaa is preferably Leu, but may be other amino acids including Pro although not Arg or Lys, and Yaa may be Pro. Amino acid amides and methyl esters are also readily hydrolyzed, but rates on arylamides are exceedingly low.. The enzyme catalyses Release of an N-terminal amino acid, preferentially leucine, but not glutamic or aspartic acids.. Presumably involved in the processing and regular turnover of intracellular proteins. Catalyzes the removal of unsubstituted N-terminal amino acids from various peptides. The protein is Probable cytosol aminopeptidase of Leptospira interrogans serogroup Icterohaemorrhagiae serovar copenhageni (strain Fiocruz L1-130).